A 199-amino-acid polypeptide reads, in one-letter code: Chorismate pyruvate-lyase (199 aa).

It belongs to the chorismate pyruvate-lyase type 2 family.

It catalyses the reaction chorismate = 4-hydroxybenzoate + pyruvate. In terms of biological role, removes the pyruvyl group from chorismate to provide 4-hydroxybenzoate (4HB). Involved in the synthesis of glycosylated p-hydroxybenzoic acid methyl esters (p-HBADs) and phenolic glycolipids (PGL) that play important roles in the pathogenesis of mycobacterial infections. In Mycobacterium bovis (strain ATCC BAA-935 / AF2122/97), this protein is Chorismate pyruvate-lyase.